A 902-amino-acid polypeptide reads, in one-letter code: Protein translocase subunit SecA (902 aa).

ATP is bound by residues glutamine 87, 105–109 (GEGKT), and aspartate 512. Residues 851–902 (LARQQQLSHQAPVEELTQGSAAAAQEGRKVGRNDPCPCGSGKKFKHCHGKLQ) form a disordered region. Cysteine 886, cysteine 888, cysteine 897, and histidine 898 together coordinate Zn(2+). The segment covering 892–902 (KKFKHCHGKLQ) has biased composition (basic residues).

Belongs to the SecA family. In terms of assembly, monomer and homodimer. Part of the essential Sec protein translocation apparatus which comprises SecA, SecYEG and auxiliary proteins SecDF-YajC and YidC. It depends on Zn(2+) as a cofactor.

It localises to the cell inner membrane. The protein resides in the cytoplasm. It carries out the reaction ATP + H2O + cellular proteinSide 1 = ADP + phosphate + cellular proteinSide 2.. Functionally, part of the Sec protein translocase complex. Interacts with the SecYEG preprotein conducting channel. Has a central role in coupling the hydrolysis of ATP to the transfer of proteins into and across the cell membrane, serving both as a receptor for the preprotein-SecB complex and as an ATP-driven molecular motor driving the stepwise translocation of polypeptide chains across the membrane. The polypeptide is Protein translocase subunit SecA (Sodalis glossinidius (strain morsitans)).